The chain runs to 165 residues: Phosphopantetheine adenylyltransferase (165 aa).

Residue threonine 10 participates in substrate binding. ATP is bound by residues 10–11 (TF) and histidine 18. The substrate site is built by lysine 42, leucine 75, and arginine 89. Residues 90–92 (GVR), glutamate 100, and 125–131 (YTYVAST) contribute to the ATP site.

Belongs to the bacterial CoaD family. In terms of assembly, homohexamer. The cofactor is Mg(2+).

It localises to the cytoplasm. The catalysed reaction is (R)-4'-phosphopantetheine + ATP + H(+) = 3'-dephospho-CoA + diphosphate. It participates in cofactor biosynthesis; coenzyme A biosynthesis; CoA from (R)-pantothenate: step 4/5. In terms of biological role, reversibly transfers an adenylyl group from ATP to 4'-phosphopantetheine, yielding dephospho-CoA (dPCoA) and pyrophosphate. The chain is Phosphopantetheine adenylyltransferase from Chlorobaculum tepidum (strain ATCC 49652 / DSM 12025 / NBRC 103806 / TLS) (Chlorobium tepidum).